The primary structure comprises 64 residues: Conotoxin Am1.1 (64 aa).

Residues 1-22 (MSCLPVFVILLLLTASGPSVDA) form the signal peptide. Positions 23–49 (RLKTKDDVPLSSFRDNAKSTLRRLQDK) are excised as a propeptide. Position 60 is a 4-hydroxyproline; partial; in major form (P60).

It belongs to the conotoxin T superfamily. In terms of processing, contains 2 disulfide bonds. Expressed by the venom duct.

It localises to the secreted. Probable toxin that inhibits ion channels. This is Conotoxin Am1.1 from Conus amadis (Amadis cone).